A 203-amino-acid chain; its full sequence is Urease accessory protein UreG (203 aa).

13–20 is a GTP binding site; the sequence is GPVGSGKT.

This sequence belongs to the SIMIBI class G3E GTPase family. UreG subfamily. As to quaternary structure, homodimer. UreD, UreF and UreG form a complex that acts as a GTP-hydrolysis-dependent molecular chaperone, activating the urease apoprotein by helping to assemble the nickel containing metallocenter of UreC. The UreE protein probably delivers the nickel.

The protein localises to the cytoplasm. Facilitates the functional incorporation of the urease nickel metallocenter. This process requires GTP hydrolysis, probably effectuated by UreG. The sequence is that of Urease accessory protein UreG from Psychromonas ingrahamii (strain DSM 17664 / CCUG 51855 / 37).